Consider the following 393-residue polypeptide: Diphosphomevalonate decarboxylase (393 aa).

(R)-5-diphosphomevalonate is bound by residues 21–24 (YWGK), R77, 156–161 (SGSACR), and T212.

This sequence belongs to the diphosphomevalonate decarboxylase family. Homodimer.

The protein localises to the cytoplasm. The protein resides in the nucleus. It carries out the reaction (R)-5-diphosphomevalonate + ATP = isopentenyl diphosphate + ADP + phosphate + CO2. The protein operates within isoprenoid biosynthesis; isopentenyl diphosphate biosynthesis via mevalonate pathway; isopentenyl diphosphate from (R)-mevalonate: step 3/3. Its function is as follows. Diphosphomevalonate decarboxylase; part of the second module of ergosterol biosynthesis pathway that includes the middle steps of the pathway. Mvd1 converts diphosphomevalonate into isopentenyl diphosphate. The second module is carried out in the vacuole and involves the formation of farnesyl diphosphate, which is also an important intermediate in the biosynthesis of ubiquinone, dolichol, heme and prenylated proteins. Activity by the mevalonate kinase erg12 first converts mevalonate into 5-phosphomevalonate. 5-phosphomevalonate is then further converted to 5-diphosphomevalonate by the phosphomevalonate kinase erg8. The diphosphomevalonate decarboxylase mvd1 then produces isopentenyl diphosphate. The isopentenyl-diphosphate delta-isomerase idi1 then catalyzes the 1,3-allylic rearrangement of the homoallylic substrate isopentenyl (IPP) to its highly electrophilic allylic isomer, dimethylallyl diphosphate (DMAPP). Finally the farnesyl diphosphate synthase fps1 catalyzes the sequential condensation of isopentenyl pyrophosphate with dimethylallyl pyrophosphate, and then with the resultant geranylpyrophosphate to the ultimate product farnesyl pyrophosphate. This is Diphosphomevalonate decarboxylase (mvd1) from Schizosaccharomyces pombe (strain 972 / ATCC 24843) (Fission yeast).